The sequence spans 364 residues: UDP-N-acetylglucosamine--N-acetylmuramyl-(pentapeptide) pyrophosphoryl-undecaprenol N-acetylglucosamine transferase (364 aa).

Residues 14–16, Asn126, Arg163, Ser190, Ile246, 265–270, and Gln291 each bind UDP-N-acetyl-alpha-D-glucosamine; these read TGG and ALTVSE.

It belongs to the glycosyltransferase 28 family. MurG subfamily.

It localises to the cell inner membrane. It catalyses the reaction di-trans,octa-cis-undecaprenyl diphospho-N-acetyl-alpha-D-muramoyl-L-alanyl-D-glutamyl-meso-2,6-diaminopimeloyl-D-alanyl-D-alanine + UDP-N-acetyl-alpha-D-glucosamine = di-trans,octa-cis-undecaprenyl diphospho-[N-acetyl-alpha-D-glucosaminyl-(1-&gt;4)]-N-acetyl-alpha-D-muramoyl-L-alanyl-D-glutamyl-meso-2,6-diaminopimeloyl-D-alanyl-D-alanine + UDP + H(+). The protein operates within cell wall biogenesis; peptidoglycan biosynthesis. Cell wall formation. Catalyzes the transfer of a GlcNAc subunit on undecaprenyl-pyrophosphoryl-MurNAc-pentapeptide (lipid intermediate I) to form undecaprenyl-pyrophosphoryl-MurNAc-(pentapeptide)GlcNAc (lipid intermediate II). In Shewanella loihica (strain ATCC BAA-1088 / PV-4), this protein is UDP-N-acetylglucosamine--N-acetylmuramyl-(pentapeptide) pyrophosphoryl-undecaprenol N-acetylglucosamine transferase.